The following is a 640-amino-acid chain: tRNA uridine 5-carboxymethylaminomethyl modification enzyme MnmG (640 aa).

An FAD-binding site is contributed by 9-14 (GGGHAG). 289–303 (GPRYCPSIEDKINKF) serves as a coordination point for NAD(+).

It belongs to the MnmG family. Homodimer. Heterotetramer of two MnmE and two MnmG subunits. Requires FAD as cofactor.

It localises to the cytoplasm. NAD-binding protein involved in the addition of a carboxymethylaminomethyl (cmnm) group at the wobble position (U34) of certain tRNAs, forming tRNA-cmnm(5)s(2)U34. In Campylobacter hominis (strain ATCC BAA-381 / DSM 21671 / CCUG 45161 / LMG 19568 / NCTC 13146 / CH001A), this protein is tRNA uridine 5-carboxymethylaminomethyl modification enzyme MnmG.